Consider the following 274-residue polypeptide: tRNA dimethylallyltransferase (274 aa).

The tract at residues 9 to 12 is interaction with substrate tRNA; that stretch reads DSLS.

Belongs to the IPP transferase family. In terms of assembly, monomer. Mg(2+) is required as a cofactor.

The enzyme catalyses adenosine(37) in tRNA + dimethylallyl diphosphate = N(6)-dimethylallyladenosine(37) in tRNA + diphosphate. Its function is as follows. Catalyzes the transfer of a dimethylallyl group onto the adenine at position 37 in tRNAs that read codons beginning with uridine, leading to the formation of N6-(dimethylallyl)adenosine (i(6)A). The polypeptide is tRNA dimethylallyltransferase (miaA) (Helicobacter pylori (strain P12)).